The chain runs to 309 residues: L-2-keto-3-deoxyarabonate dehydratase (309 aa).

The active-site Schiff-base intermediate with substrate is the Lys-171.

The protein belongs to the DapA family. As to quaternary structure, homodimer.

The catalysed reaction is 2-dehydro-3-deoxy-L-arabinonate = 2,5-dioxopentanoate + H2O. Catalyzes the dehydration of L-2-keto-3-deoxyarabonate (L-KDA) to alpha-ketoglutaric semialdehyde (alphaKGSA). Is involved in a degradation pathway of L-arabinose that allows A.brasilense to grow on L-arabinose as a sole carbon source. The chain is L-2-keto-3-deoxyarabonate dehydratase (araD) from Azospirillum brasilense.